The following is a 320-amino-acid chain: MAPTSVSNARIEKAVLDAHEKQKNKHGGKNADYIPILAQVPSTLFGVSVATVDGQVFTAGDAGYEFALESISKIFTLALVIEQRGPRELRLKVGADPTGEAFNSVLALELHNDKPMSPLVNAGAISTTSLVDAVGPEDRWRQIVGAQSDFAGRQISISEEINASEQATNFHNRAIAWLLRGSGYIYCDPMEACDIYTRQCSTLVTTADLAVMGATLANGGTNPITGKRVIARKNVPHVLAEMTMEGVYTRSGDWAYTVGLPAKSGVGGGLVAVAPGQLAIAAFSPPLDKVGNSVRAQAAVAQIADTLQLGLFNVPGEEDE.

Serine 70, asparagine 121, glutamate 165, asparagine 172, tyrosine 196, tyrosine 248, and valine 266 together coordinate substrate.

The protein belongs to the glutaminase family. In terms of assembly, homotetramer.

It carries out the reaction L-glutamine + H2O = L-glutamate + NH4(+). The protein is Glutaminase of Mycobacterium marinum (strain ATCC BAA-535 / M).